The chain runs to 554 residues: Arginine--tRNA ligase (554 aa).

A 'HIGH' region motif is present at residues 129–139; the sequence is ANPTGPLHIGH.

The protein belongs to the class-I aminoacyl-tRNA synthetase family. In terms of assembly, monomer.

It is found in the cytoplasm. The enzyme catalyses tRNA(Arg) + L-arginine + ATP = L-arginyl-tRNA(Arg) + AMP + diphosphate. The polypeptide is Arginine--tRNA ligase (Citrifermentans bemidjiense (strain ATCC BAA-1014 / DSM 16622 / JCM 12645 / Bem) (Geobacter bemidjiensis)).